A 372-amino-acid polypeptide reads, in one-letter code: tRNA-specific 2-thiouridylase MnmA (372 aa).

ATP contacts are provided by residues 7–14 (GLSGGVDS) and Met33. Positions 104–106 (NPD) are interaction with target base in tRNA. Cys109 acts as the Nucleophile in catalysis. The cysteines at positions 109 and 202 are disulfide-linked. Residue Gly134 coordinates ATP. The tract at residues 152–154 (KDQ) is interaction with tRNA. Catalysis depends on Cys202, which acts as the Cysteine persulfide intermediate. The segment at 310–311 (RY) is interaction with tRNA.

Belongs to the MnmA/TRMU family.

The protein resides in the cytoplasm. It catalyses the reaction S-sulfanyl-L-cysteinyl-[protein] + uridine(34) in tRNA + AH2 + ATP = 2-thiouridine(34) in tRNA + L-cysteinyl-[protein] + A + AMP + diphosphate + H(+). In terms of biological role, catalyzes the 2-thiolation of uridine at the wobble position (U34) of tRNA, leading to the formation of s(2)U34. The protein is tRNA-specific 2-thiouridylase MnmA of Mesomycoplasma hyopneumoniae (strain 7448) (Mycoplasma hyopneumoniae).